Here is a 134-residue protein sequence, read N- to C-terminus: ATP synthase epsilon chain, chloroplastic (134 aa).

The protein belongs to the ATPase epsilon chain family. As to quaternary structure, F-type ATPases have 2 components, CF(1) - the catalytic core - and CF(0) - the membrane proton channel. CF(1) has five subunits: alpha(3), beta(3), gamma(1), delta(1), epsilon(1). CF(0) has three main subunits: a, b and c.

It localises to the plastid. The protein resides in the chloroplast thylakoid membrane. Functionally, produces ATP from ADP in the presence of a proton gradient across the membrane. This Pyropia yezoensis (Susabi-nori) protein is ATP synthase epsilon chain, chloroplastic.